The following is a 124-amino-acid chain: V-type proton ATPase subunit F (124 aa).

The protein belongs to the V-ATPase F subunit family. V-ATPase is a heteromultimeric enzyme composed of a peripheral catalytic V1 complex (components A to H) attached to an integral membrane V0 proton pore complex (components: a, c, c', c'', d, e, f and VOA1).

The protein localises to the vacuole membrane. Subunit of the V1 complex of vacuolar(H+)-ATPase (V-ATPase), a multisubunit enzyme composed of a peripheral complex (V1) that hydrolyzes ATP and a membrane integral complex (V0) that translocates protons. V-ATPase is responsible for acidifying and maintaining the pH of intracellular compartments. The sequence is that of V-type proton ATPase subunit F (vma7) from Neosartorya fischeri (strain ATCC 1020 / DSM 3700 / CBS 544.65 / FGSC A1164 / JCM 1740 / NRRL 181 / WB 181) (Aspergillus fischerianus).